Reading from the N-terminus, the 144-residue chain is Large ribosomal subunit protein uL16 (144 aa).

Residues 1-16 (MLTPKRVKHRKQHRGK) are compositionally biased toward basic residues. Residues 1 to 22 (MLTPKRVKHRKQHRGKMAGNAK) are disordered.

Belongs to the universal ribosomal protein uL16 family. Part of the 50S ribosomal subunit.

Functionally, binds 23S rRNA and is also seen to make contacts with the A and possibly P site tRNAs. The polypeptide is Large ribosomal subunit protein uL16 (Brevibacillus brevis (strain 47 / JCM 6285 / NBRC 100599)).